Reading from the N-terminus, the 226-residue chain is Thiamine-phosphate synthase (226 aa).

4-amino-2-methyl-5-(diphosphooxymethyl)pyrimidine contacts are provided by residues 46-50 (QFRDK) and aspartate 83. Residues aspartate 84 and aspartate 103 each contribute to the Mg(2+) site. Serine 122 lines the 4-amino-2-methyl-5-(diphosphooxymethyl)pyrimidine pocket. Residue 149 to 151 (TQS) participates in 2-[(2R,5Z)-2-carboxy-4-methylthiazol-5(2H)-ylidene]ethyl phosphate binding. Lysine 152 is a binding site for 4-amino-2-methyl-5-(diphosphooxymethyl)pyrimidine. Residues glycine 181 and 201 to 202 (IT) each bind 2-[(2R,5Z)-2-carboxy-4-methylthiazol-5(2H)-ylidene]ethyl phosphate.

It belongs to the thiamine-phosphate synthase family. The cofactor is Mg(2+).

It carries out the reaction 2-[(2R,5Z)-2-carboxy-4-methylthiazol-5(2H)-ylidene]ethyl phosphate + 4-amino-2-methyl-5-(diphosphooxymethyl)pyrimidine + 2 H(+) = thiamine phosphate + CO2 + diphosphate. It catalyses the reaction 2-(2-carboxy-4-methylthiazol-5-yl)ethyl phosphate + 4-amino-2-methyl-5-(diphosphooxymethyl)pyrimidine + 2 H(+) = thiamine phosphate + CO2 + diphosphate. The catalysed reaction is 4-methyl-5-(2-phosphooxyethyl)-thiazole + 4-amino-2-methyl-5-(diphosphooxymethyl)pyrimidine + H(+) = thiamine phosphate + diphosphate. It functions in the pathway cofactor biosynthesis; thiamine diphosphate biosynthesis; thiamine phosphate from 4-amino-2-methyl-5-diphosphomethylpyrimidine and 4-methyl-5-(2-phosphoethyl)-thiazole: step 1/1. Condenses 4-methyl-5-(beta-hydroxyethyl)thiazole monophosphate (THZ-P) and 2-methyl-4-amino-5-hydroxymethyl pyrimidine pyrophosphate (HMP-PP) to form thiamine monophosphate (TMP). The sequence is that of Thiamine-phosphate synthase from Haemophilus influenzae (strain PittGG).